Consider the following 968-residue polypeptide: RNA polymerase-associated protein RapA (968 aa).

Residues 163-332 enclose the Helicase ATP-binding domain; that stretch reads EVGSRYAPRV…FARLRLLDPD (170 aa). ATP is bound at residue 176–183; that stretch reads DEVGLGKT. Positions 278–281 match the DEAH box motif; sequence DEAH. The Helicase C-terminal domain occupies 491 to 655; sequence RVDWLIEFLK…EFADELINVL (165 aa).

The protein belongs to the SNF2/RAD54 helicase family. RapA subfamily. As to quaternary structure, interacts with the RNAP. Has a higher affinity for the core RNAP than for the holoenzyme. Its ATPase activity is stimulated by binding to RNAP.

In terms of biological role, transcription regulator that activates transcription by stimulating RNA polymerase (RNAP) recycling in case of stress conditions such as supercoiled DNA or high salt concentrations. Probably acts by releasing the RNAP, when it is trapped or immobilized on tightly supercoiled DNA. Does not activate transcription on linear DNA. Probably not involved in DNA repair. The chain is RNA polymerase-associated protein RapA from Shewanella frigidimarina (strain NCIMB 400).